Here is a 210-residue protein sequence, read N- to C-terminus: Probable GTP-binding protein EngB (210 aa).

Positions 25–199 constitute an EngB-type G domain; the sequence is CGIEVAFAGR…RQKLDSWFSE (175 aa). GTP-binding positions include 33-40, 60-64, 78-81, 145-148, and 178-180; these read GRSNAGKS, GRTQL, DLPG, TKAD, and FSS. Mg(2+)-binding residues include S40 and T62.

Belongs to the TRAFAC class TrmE-Era-EngA-EngB-Septin-like GTPase superfamily. EngB GTPase family. Requires Mg(2+) as cofactor.

Necessary for normal cell division and for the maintenance of normal septation. In Salmonella dublin (strain CT_02021853), this protein is Probable GTP-binding protein EngB.